Reading from the N-terminus, the 360-residue chain is Cannabinoid receptor 2 (360 aa).

Over Met-1–Lys-33 the chain is Extracellular. N-linked (GlcNAc...) asparagine glycosylation occurs at Asn-11. Residues Thr-34 to Leu-59 form a helical membrane-spanning segment. At Ser-60–Leu-71 the chain is on the cytoplasmic side. The helical transmembrane segment at Phe-72–Val-92 threads the bilayer. At Asn-93–Ala-104 the chain is on the extracellular side. A helical membrane pass occupies residues Val-105 to Ile-129. Residues Asp-130–Arg-149 are Cytoplasmic-facing. Residues Ala-150 to Trp-172 form a helical membrane-spanning segment. The Extracellular portion of the chain corresponds to Thr-173–Asn-188. A helical transmembrane segment spans residues Asp-189–Trp-214. At Lys-215–Thr-246 the chain is on the cytoplasmic side. The chain crosses the membrane as a helical span at residues Leu-247–His-267. The Extracellular segment spans residues Ser-268–Lys-279. A helical membrane pass occupies residues Ala-280 to Leu-301. The Cytoplasmic portion of the chain corresponds to Arg-302–Cys-360. The disordered stretch occupies residues Glu-327–Cys-360. 2 positions are modified to phosphoserine: Ser-335 and Ser-336. Thr-338 carries the post-translational modification Phosphothreonine. Residues Asp-351–Cys-360 show a composition bias toward basic and acidic residues. A Phosphoserine modification is found at Ser-352.

It belongs to the G-protein coupled receptor 1 family. Constitutively phosphorylated on Ser-352; phosphorylation increases cell internalization and desensitizes the receptor. Preferentially expressed in cells of the immune system with higher expression in B-cells and NK cells (at protein level). Expressed in skin in suprabasal layers and hair follicles (at protein level). Highly expressed in tonsil and to a lower extent in spleen, peripheral blood mononuclear cells, and thymus. PubMed:14657172 could not detect expression in normal brain. Expressed in brain by perivascular microglial cells and dorsal root ganglion sensory neurons (at protein level). Two isoforms are produced by alternative promoter usage and differ only in the 5' UTR: isoform CB2A is observed predominantly in testis with some expression in brain, while isoform CB2B is predominant in spleen and leukocytes.

It localises to the cell membrane. The protein resides in the cell projection. It is found in the dendrite. The protein localises to the perikaryon. In terms of biological role, heterotrimeric G protein-coupled receptor for endocannabinoid 2-arachidonoylglycerol mediating inhibition of adenylate cyclase. May function in inflammatory response, nociceptive transmission and bone homeostasis. This is Cannabinoid receptor 2 (CNR2) from Homo sapiens (Human).